The chain runs to 367 residues: 4-hydroxy-3-methylbut-2-en-1-yl diphosphate synthase (flavodoxin) (367 aa).

[4Fe-4S] cluster contacts are provided by C268, C271, C303, and E310.

Belongs to the IspG family. It depends on [4Fe-4S] cluster as a cofactor.

The enzyme catalyses (2E)-4-hydroxy-3-methylbut-2-enyl diphosphate + oxidized [flavodoxin] + H2O + 2 H(+) = 2-C-methyl-D-erythritol 2,4-cyclic diphosphate + reduced [flavodoxin]. The protein operates within isoprenoid biosynthesis; isopentenyl diphosphate biosynthesis via DXP pathway; isopentenyl diphosphate from 1-deoxy-D-xylulose 5-phosphate: step 5/6. In terms of biological role, converts 2C-methyl-D-erythritol 2,4-cyclodiphosphate (ME-2,4cPP) into 1-hydroxy-2-methyl-2-(E)-butenyl 4-diphosphate. This is 4-hydroxy-3-methylbut-2-en-1-yl diphosphate synthase (flavodoxin) from Halalkalibacterium halodurans (strain ATCC BAA-125 / DSM 18197 / FERM 7344 / JCM 9153 / C-125) (Bacillus halodurans).